A 593-amino-acid chain; its full sequence is ATP-dependent RNA helicase MRH4, mitochondrial (593 aa).

The transit peptide at 1-106 (MFPLRAQSAS…QLRIFPTVRA (106 aa)) directs the protein to the mitochondrion. Residues 42 to 51 (GANGANRANG) are compositionally biased toward low complexity. Residues 42-63 (GANGANRANGTNSSQPESQSSK) are disordered. The span at 52–63 (TNSSQPESQSSK) shows a compositional bias: polar residues. Residues 130 to 137 (VLKPTPIQ) carry the Q motif motif. Residues 181 to 399 (INSLQKLKVF…NRIFPTDDSI (219 aa)) form the Helicase ATP-binding domain. 194–201 (AETGSGKT) lines the ATP pocket. Positions 347–350 (DEAD) match the DEAD box motif. Residues 433–593 (ALAQALYAIT…NAVKRGIQMG (161 aa)) enclose the Helicase C-terminal domain.

The protein belongs to the DEAD box helicase family. MRH4 subfamily.

It is found in the mitochondrion. It catalyses the reaction ATP + H2O = ADP + phosphate + H(+). In terms of biological role, ATP-binding RNA helicase involved in mitochondrial RNA metabolism. Required for maintenance of mitochondrial DNA. The polypeptide is ATP-dependent RNA helicase MRH4, mitochondrial (MRH4) (Scheffersomyces stipitis (strain ATCC 58785 / CBS 6054 / NBRC 10063 / NRRL Y-11545) (Yeast)).